Reading from the N-terminus, the 637-residue chain is MSEVKQYEGREYDVIVVGAGHAGSEAALAAARMGNKTLLMTINLDMVAFMPCNPSIGGPAKGIVVREIDALGGEMGRNIDKTYVQMRMLNTGKGPAVRALRAQADKHAYHAEMKKTIEAEPNLTLRQGIVDDLIVEDGVCKGVITNTGARYQAKSVVLTLGTAARGKIIIGELQYSSGPNNSQAALELTKNLTEKYHFDLERFKTGTPPRVDGGTINYDETEEQPGDEVPNHFSFQTPDSKYIELKNQLSCWLTYTNEKTHEIIRENLDRAPMFSGMIEGVGPRYCPSIEDKIVRFADKSRHQLFLEPEGRKTDEWYVQGLSTSMPEEVQQQILHSIKGLEEAEMMRPGYAIEYDVVAPYQLKNTLETKLVKNLYTAGQTNGTSGYEEAAGQGLIAGINAGRRALGKEPLTLKRSDAYIGVMIDDLVTKGTKEPYRLLTSRAEYRLILRHDNADLRLTEVGHNLGLVSDEEYNAFLEKKQDIKDELQRLSEIRIKPSQVQKFLESKGSNGLKDGVLASEFLRRPEVNYSDLLKFIDAPEKDLDRRVIEQVEIETKYAGYIKKAQDRVDRLKRMEEKAIPDRIDYEAINGLATEGRQKLEKIRPTTIAQASRISGVTPADIAILSVYIQQGKIAKIAE.

Residue 18–23 coordinates FAD; the sequence is GAGHAG. Position 282-296 (282-296) interacts with NAD(+); it reads GPRYCPSIEDKIVRF.

The protein belongs to the MnmG family. As to quaternary structure, homodimer. Heterotetramer of two MnmE and two MnmG subunits. FAD serves as cofactor.

It is found in the cytoplasm. In terms of biological role, NAD-binding protein involved in the addition of a carboxymethylaminomethyl (cmnm) group at the wobble position (U34) of certain tRNAs, forming tRNA-cmnm(5)s(2)U34. This chain is tRNA uridine 5-carboxymethylaminomethyl modification enzyme MnmG, found in Pediococcus pentosaceus (strain ATCC 25745 / CCUG 21536 / LMG 10740 / 183-1w).